Here is a 446-residue protein sequence, read N- to C-terminus: Na(+)-translocating NADH-quinone reductase subunit A (446 aa).

This sequence belongs to the NqrA family. In terms of assembly, composed of six subunits; NqrA, NqrB, NqrC, NqrD, NqrE and NqrF.

It carries out the reaction a ubiquinone + n Na(+)(in) + NADH + H(+) = a ubiquinol + n Na(+)(out) + NAD(+). Functionally, NQR complex catalyzes the reduction of ubiquinone-1 to ubiquinol by two successive reactions, coupled with the transport of Na(+) ions from the cytoplasm to the periplasm. NqrA to NqrE are probably involved in the second step, the conversion of ubisemiquinone to ubiquinol. In Histophilus somni (strain 2336) (Haemophilus somnus), this protein is Na(+)-translocating NADH-quinone reductase subunit A.